Consider the following 483-residue polypeptide: Glutamate--tRNA ligase (483 aa).

Residues 11-21 (PSPTGHLHIGN) carry the 'HIGH' region motif. The Zn(2+) site is built by cysteine 108, cysteine 110, cysteine 135, and histidine 137. Residues 252 to 256 (KLSKR) carry the 'KMSKS' region motif. Lysine 255 contacts ATP.

This sequence belongs to the class-I aminoacyl-tRNA synthetase family. Glutamate--tRNA ligase type 1 subfamily. As to quaternary structure, monomer. Zn(2+) is required as a cofactor.

The protein localises to the cytoplasm. The enzyme catalyses tRNA(Glu) + L-glutamate + ATP = L-glutamyl-tRNA(Glu) + AMP + diphosphate. In terms of biological role, catalyzes the attachment of glutamate to tRNA(Glu) in a two-step reaction: glutamate is first activated by ATP to form Glu-AMP and then transferred to the acceptor end of tRNA(Glu). The protein is Glutamate--tRNA ligase of Bacillus pumilus (strain SAFR-032).